The sequence spans 801 residues: Phenylalanine--tRNA ligase beta subunit (801 aa).

The tRNA-binding domain occupies 39 to 153 (AAGLSKIVVG…EDAVPGEEVF (115 aa)). The B5 domain occupies 406-481 (TSDVEVSSTL…RIYGYDRLPT (76 aa)). Mg(2+) is bound by residues Asp-459, Asp-465, Glu-468, and Glu-469. In terms of domain architecture, FDX-ACB spans 708–801 (TKFPAVSRDV…LEEKVNAEVR (94 aa)).

This sequence belongs to the phenylalanyl-tRNA synthetase beta subunit family. Type 1 subfamily. Tetramer of two alpha and two beta subunits. Mg(2+) is required as a cofactor.

Its subcellular location is the cytoplasm. It carries out the reaction tRNA(Phe) + L-phenylalanine + ATP = L-phenylalanyl-tRNA(Phe) + AMP + diphosphate + H(+). The sequence is that of Phenylalanine--tRNA ligase beta subunit from Streptococcus pneumoniae serotype 4 (strain ATCC BAA-334 / TIGR4).